Here is a 620-residue protein sequence, read N- to C-terminus: Threonine--tRNA ligase (620 aa).

The TGS domain occupies 1 to 42; the sequence is MFEIAKGISNSLAKKSVGAKVDGKNVDMSYILDHDAEVEFID. Residues 224–515 are catalytic; the sequence is DHRKLGKELE…LIEHYAGAFP (292 aa). 3 residues coordinate Zn(2+): C315, H366, and H492.

This sequence belongs to the class-II aminoacyl-tRNA synthetase family. As to quaternary structure, homodimer. It depends on Zn(2+) as a cofactor.

It localises to the cytoplasm. The catalysed reaction is tRNA(Thr) + L-threonine + ATP = L-threonyl-tRNA(Thr) + AMP + diphosphate + H(+). Catalyzes the attachment of threonine to tRNA(Thr) in a two-step reaction: L-threonine is first activated by ATP to form Thr-AMP and then transferred to the acceptor end of tRNA(Thr). Also edits incorrectly charged L-seryl-tRNA(Thr). In Fusobacterium nucleatum subsp. nucleatum (strain ATCC 25586 / DSM 15643 / BCRC 10681 / CIP 101130 / JCM 8532 / KCTC 2640 / LMG 13131 / VPI 4355), this protein is Threonine--tRNA ligase.